The sequence spans 520 residues: Putative hydrolase Mb2247c (520 aa).

The signal sequence occupies residues 1–34 (MAAMWRRRPLSSALLSFGLLLGGLPLAAPPLAGA). A helical transmembrane segment spans residues 104-124 (FGALLVNPGGPGASAVDMVAA). Residues 105–403 (GALLVNPGGP…APTPADPAAW (299 aa)) form the AB hydrolase-1 domain. Ser232 functions as the Nucleophile in the catalytic mechanism. Residue Asp461 is part of the active site. His488 acts as the Proton donor in catalysis.

This sequence belongs to the peptidase S33 family.

The protein resides in the cell membrane. In Mycobacterium bovis (strain ATCC BAA-935 / AF2122/97), this protein is Putative hydrolase Mb2247c.